A 369-amino-acid polypeptide reads, in one-letter code: MPRAPKRQRCMPEEDLQSQSETQGLEGAQAPLAVEEDASSSTSTSSSFPSSFPSSSSSSSSSCYPLIPSTPEEVSADDETPNPPQSAQIACSSPSVVASLPLDQSDEGSSSQKEESPSTLQVLPDSESLPRSEIDEKVTDLVQFLLFKYQMKEPITKAEILESVIRNYEDHFPLLFSEASECMLLVFGIDVKEVDPTGHSFVLVTSLGLTYDGMLSDVQSMPKTGILILILSIVFIEGYCTPEEVIWEALNMMGLYDGMEHLIYGEPRKLLTQDWVQENYLEYRQVPGSDPARYEFLWGPRAHAEIRKMSLLKFLAKVNGSDPRSFPLWYEEALKDEEERAQDRIATTDDTTAMASASSSATGSFSYPE.

Residues Met-1–Arg-131 are disordered. The span at Ser-39 to Ser-62 shows a compositional bias: low complexity. Polar residues-rich tracts occupy residues Gln-85–Val-96 and Glu-107–Gln-121. The region spanning Ile-134 to Ala-333 is the MAGE domain. The disordered stretch occupies residues Arg-340–Glu-369. Low complexity predominate over residues Thr-348 to Glu-369.

Expressed in many tumors of several types, such as melanoma, head and neck squamous cell carcinoma, lung carcinoma and breast carcinoma, but not in normal tissues except for spermatogonia, spermatocytes and placenta.

The protein resides in the nucleus. Not known, though may play a role in embryonal development and tumor transformation or aspects of tumor progression. This Homo sapiens (Human) protein is Melanoma-associated antigen 10 (MAGEA10).